The chain runs to 775 residues: 5-methyltetrahydropteroyltriglutamate--homocysteine methyltransferase (775 aa).

Residues 16–19 and lysine 115 contribute to the 5-methyltetrahydropteroyltri-L-glutamate site; that span reads REMK. Residues 435–437 and glutamate 488 each bind L-homocysteine; that span reads IGS. L-methionine contacts are provided by residues 435 to 437 and glutamate 488; that span reads IGS. 5-methyltetrahydropteroyltri-L-glutamate is bound by residues 519 to 520 and tryptophan 565; that span reads RC. Residue aspartate 603 participates in L-homocysteine binding. Aspartate 603 serves as a coordination point for L-methionine. Glutamate 609 is a binding site for 5-methyltetrahydropteroyltri-L-glutamate. Zn(2+) is bound by residues histidine 645, cysteine 647, and glutamate 669. The active-site Proton donor is the histidine 698. Cysteine 730 serves as a coordination point for Zn(2+).

The protein belongs to the vitamin-B12 independent methionine synthase family. Zn(2+) is required as a cofactor.

It catalyses the reaction 5-methyltetrahydropteroyltri-L-glutamate + L-homocysteine = tetrahydropteroyltri-L-glutamate + L-methionine. The protein operates within amino-acid biosynthesis; L-methionine biosynthesis via de novo pathway; L-methionine from L-homocysteine (MetE route): step 1/1. Functionally, catalyzes the transfer of a methyl group from 5-methyltetrahydrofolate to homocysteine resulting in methionine formation. This Coxiella burnetii (strain CbuG_Q212) (Coxiella burnetii (strain Q212)) protein is 5-methyltetrahydropteroyltriglutamate--homocysteine methyltransferase.